Consider the following 256-residue polypeptide: UPF0246 protein HRM2_41860 (256 aa).

It belongs to the UPF0246 family.

The chain is UPF0246 protein HRM2_41860 from Desulforapulum autotrophicum (strain ATCC 43914 / DSM 3382 / VKM B-1955 / HRM2) (Desulfobacterium autotrophicum).